A 230-amino-acid chain; its full sequence is Oxaloacetate tautomerase FAHD1, mitochondrial (230 aa).

A mitochondrion-targeting transit peptide spans 1 to 26; the sequence is MAAAAAAAAQRLLAASTKIIGVGRNY. Mg(2+) contacts are provided by Glu73, Glu75, and Asp104.

This sequence belongs to the FAH family. The cofactor is Mg(2+). Requires Mn(2+) as cofactor.

The protein localises to the mitochondrion. The enzyme catalyses oxaloacetate = enol-oxaloacetate. Tautomerase that converts enol-oxaloacetate, a strong inhibitor of succinate dehydrogenase, to the physiological keto form of oxaloacetate. In Oryza sativa subsp. japonica (Rice), this protein is Oxaloacetate tautomerase FAHD1, mitochondrial.